Reading from the N-terminus, the 217-residue chain is CLA biosynthesis enone reductase (217 aa).

Residues arginine 20, serine 22, and arginine 24 each coordinate FMN. Cysteine 51 contributes to the 10-oxooctadecanoate binding site. Positions 78 and 81 each coordinate FMN. Arginine 118 is a 10-oxooctadecanoate binding site. FMN is bound by residues asparagine 165, serine 168, glycine 169, and arginine 206.

Belongs to the nitroreductase family. Homodimer. The cofactor is FMN.

The catalysed reaction is 10-oxo-(11E)-octadecenoate + NADH + H(+) = 10-oxooctadecanoate + NAD(+). It functions in the pathway lipid metabolism; fatty acid metabolism. Is involved in a saturation metabolic pathway of polyunsaturated fatty acids, that detoxifies unsaturated fatty acids and generates hydroxy fatty acids, oxo fatty acids, conjugated fatty acids such as conjugated linoleic acids (CLAs), and partially saturated trans-fatty acids as intermediates. CLA-ER catalyzes the saturation of the carbon-carbon double bond in 10-oxo-(11E)-octadecenoate to produce 10-oxooctadecanoate, during linoleate metabolism. As part of the gut microbiome, this enzyme modifies host fatty acid composition and is expected to improve human health by altering lipid metabolism related to the onset of metabolic syndrome. The protein is CLA biosynthesis enone reductase of Lactiplantibacillus plantarum (Lactobacillus plantarum).